We begin with the raw amino-acid sequence, 334 residues long: Glycerol-3-phosphate dehydrogenase [NAD(P)+] (334 aa).

NADPH contacts are provided by W13, R33, and K106. Positions 106, 137, and 139 each coordinate sn-glycerol 3-phosphate. An NADPH-binding site is contributed by A141. K192, D245, S255, R256, and N257 together coordinate sn-glycerol 3-phosphate. The Proton acceptor role is filled by K192. R256 lines the NADPH pocket. NADPH is bound by residues V280 and E282.

It belongs to the NAD-dependent glycerol-3-phosphate dehydrogenase family.

The protein resides in the cytoplasm. The catalysed reaction is sn-glycerol 3-phosphate + NAD(+) = dihydroxyacetone phosphate + NADH + H(+). The enzyme catalyses sn-glycerol 3-phosphate + NADP(+) = dihydroxyacetone phosphate + NADPH + H(+). Its pathway is membrane lipid metabolism; glycerophospholipid metabolism. Functionally, catalyzes the reduction of the glycolytic intermediate dihydroxyacetone phosphate (DHAP) to sn-glycerol 3-phosphate (G3P), the key precursor for phospholipid synthesis. In Chlamydia trachomatis serovar L2b (strain UCH-1/proctitis), this protein is Glycerol-3-phosphate dehydrogenase [NAD(P)+].